The sequence spans 287 residues: Hydroxysteroid 11-beta-dehydrogenase 1-like protein (287 aa).

Residues 1-15 (MKVLLLTGLGALFFA) form the signal peptide. NADP(+) is bound by residues 36–62 (GASA…TAHT), 87–88 (DM), and 114–116 (NHI). Ser165 is a substrate binding site. Residue Tyr178 is the Proton acceptor of the active site. NADP(+) contacts are provided by residues 178 to 182 (YSAAK) and 211 to 217 (GLRDRAS).

The protein belongs to the short-chain dehydrogenases/reductases (SDR) family.

The protein resides in the secreted. It catalyses the reaction cortisone + NADPH + H(+) = cortisol + NADP(+). In terms of biological role, unidirectional NADP(+)-dependent cortisol dehydrogenase (in vitro). The chain is Hydroxysteroid 11-beta-dehydrogenase 1-like protein (HSD11B1L) from Macaca fascicularis (Crab-eating macaque).